A 107-amino-acid chain; its full sequence is Thioredoxin (107 aa).

The Thioredoxin domain maps to 2–107 (AGVLKNVTDD…ALLRPGPVPR (106 aa)). The cysteines at positions 33 and 36 are disulfide-linked.

This sequence belongs to the thioredoxin family.

Functionally, component of the thioredoxin-thioredoxin reductase system. Participates in various redox reactions through the reversible oxidation of its active center dithiol to a disulfide and catalyzes dithiol-disulfide exchange reactions. This chain is Thioredoxin (trxA), found in Streptomyces clavuligerus.